We begin with the raw amino-acid sequence, 109 residues long: Large ribosomal subunit protein uL24 (109 aa).

It belongs to the universal ribosomal protein uL24 family. In terms of assembly, part of the 50S ribosomal subunit.

One of two assembly initiator proteins, it binds directly to the 5'-end of the 23S rRNA, where it nucleates assembly of the 50S subunit. In terms of biological role, one of the proteins that surrounds the polypeptide exit tunnel on the outside of the subunit. The sequence is that of Large ribosomal subunit protein uL24 from Legionella pneumophila (strain Corby).